The primary structure comprises 182 residues: Ferredoxin-thioredoxin reductase subunit A1, chloroplastic (182 aa).

The transit peptide at 1-81 directs the protein to the chloroplast; it reads MSSQIALSPA…VAIKSADSIN (81 aa).

This sequence belongs to the ferredoxin thioredoxin reductase alpha subunit family. Heterodimer of subunit A (variable subunit) and subunit B (catalytic subunit). Heterodimeric FTR forms a complex with ferredoxin and thioredoxin.

It is found in the plastid. The protein localises to the chloroplast. In terms of biological role, variable subunit of the ferredoxin-thioredoxin reductase (FTR), which catalyzes the two-electron reduction of thioredoxins by the electrons provided by reduced ferredoxin. The protein is Ferredoxin-thioredoxin reductase subunit A1, chloroplastic of Arabidopsis thaliana (Mouse-ear cress).